An 88-amino-acid chain; its full sequence is Small ribosomal subunit protein uS15c (88 aa).

This sequence belongs to the universal ribosomal protein uS15 family. Part of the 30S ribosomal subunit.

It is found in the plastid. It localises to the chloroplast. The polypeptide is Small ribosomal subunit protein uS15c (rps15) (Arabis hirsuta (Hairy rock-cress)).